The primary structure comprises 190 residues: Small ribosomal subunit protein uS5 (190 aa).

The S5 DRBM domain occupies 21-84; sequence FADRLVAINR…EQAKRQMIRV (64 aa). Residues 156–190 form a disordered region; it reads KKEQSPRSVAQRRGKKVADILPKRDEAPAAEAAEA. Residues 171–182 are compositionally biased toward basic and acidic residues; sequence KVADILPKRDEA.

The protein belongs to the universal ribosomal protein uS5 family. In terms of assembly, part of the 30S ribosomal subunit. Contacts proteins S4 and S8.

Functionally, with S4 and S12 plays an important role in translational accuracy. Its function is as follows. Located at the back of the 30S subunit body where it stabilizes the conformation of the head with respect to the body. The sequence is that of Small ribosomal subunit protein uS5 from Ruegeria pomeroyi (strain ATCC 700808 / DSM 15171 / DSS-3) (Silicibacter pomeroyi).